Reading from the N-terminus, the 118-residue chain is Large ribosomal subunit protein bL20 (118 aa).

This sequence belongs to the bacterial ribosomal protein bL20 family.

Functionally, binds directly to 23S ribosomal RNA and is necessary for the in vitro assembly process of the 50S ribosomal subunit. It is not involved in the protein synthesizing functions of that subunit. The protein is Large ribosomal subunit protein bL20 of Azotobacter vinelandii (strain DJ / ATCC BAA-1303).